A 195-amino-acid chain; its full sequence is ATP-dependent Clp protease proteolytic subunit (195 aa).

The active-site Nucleophile is the Ser94. Residue His119 is part of the active site.

The protein belongs to the peptidase S14 family. In terms of assembly, component of the chloroplastic Clp protease core complex.

The protein localises to the plastid. The protein resides in the chloroplast stroma. The enzyme catalyses Hydrolysis of proteins to small peptides in the presence of ATP and magnesium. alpha-casein is the usual test substrate. In the absence of ATP, only oligopeptides shorter than five residues are hydrolyzed (such as succinyl-Leu-Tyr-|-NHMec, and Leu-Tyr-Leu-|-Tyr-Trp, in which cleavage of the -Tyr-|-Leu- and -Tyr-|-Trp bonds also occurs).. Its function is as follows. Cleaves peptides in various proteins in a process that requires ATP hydrolysis. Has a chymotrypsin-like activity. Plays a major role in the degradation of misfolded proteins. The protein is ATP-dependent Clp protease proteolytic subunit of Cycas taitungensis (Prince sago).